A 236-amino-acid chain; its full sequence is Pyridoxine 5'-phosphate synthase (236 aa).

N6 lines the 3-amino-2-oxopropyl phosphate pocket. Residue 8-9 (DH) coordinates 1-deoxy-D-xylulose 5-phosphate. Position 17 (R17) interacts with 3-amino-2-oxopropyl phosphate. The active-site Proton acceptor is H42. Positions 44 and 49 each coordinate 1-deoxy-D-xylulose 5-phosphate. E69 acts as the Proton acceptor in catalysis. T99 contributes to the 1-deoxy-D-xylulose 5-phosphate binding site. Residue H192 is the Proton donor of the active site. Residues G193 and 216-217 (GH) contribute to the 3-amino-2-oxopropyl phosphate site.

This sequence belongs to the PNP synthase family. As to quaternary structure, homooctamer; tetramer of dimers.

It is found in the cytoplasm. The catalysed reaction is 3-amino-2-oxopropyl phosphate + 1-deoxy-D-xylulose 5-phosphate = pyridoxine 5'-phosphate + phosphate + 2 H2O + H(+). It participates in cofactor biosynthesis; pyridoxine 5'-phosphate biosynthesis; pyridoxine 5'-phosphate from D-erythrose 4-phosphate: step 5/5. Its function is as follows. Catalyzes the complicated ring closure reaction between the two acyclic compounds 1-deoxy-D-xylulose-5-phosphate (DXP) and 3-amino-2-oxopropyl phosphate (1-amino-acetone-3-phosphate or AAP) to form pyridoxine 5'-phosphate (PNP) and inorganic phosphate. The polypeptide is Pyridoxine 5'-phosphate synthase (Aquifex pyrophilus).